We begin with the raw amino-acid sequence, 704 residues long: UvrABC system protein B (704 aa).

In terms of domain architecture, Helicase ATP-binding spans 35 to 188; the sequence is ERINNGEKDV…DDLLRKFVSM (154 aa). Residue 48–55 participates in ATP binding; the sequence is GATGTGKS. A Beta-hairpin motif is present at residues 101–124; the sequence is YYDYYQPEAYVAQTDTFIEKDSSI. Residues 438 to 604 form the Helicase C-terminal domain; sequence QIDDLLGEIR…PLRKKIADIT (167 aa). Residues 659-694 enclose the UVR domain; the sequence is VGMIAQLTEQMHGAAAELQFEVAARIRDEVSELKKE.

The protein belongs to the UvrB family. In terms of assembly, forms a heterotetramer with UvrA during the search for lesions. Interacts with UvrC in an incision complex.

Its subcellular location is the cytoplasm. Functionally, the UvrABC repair system catalyzes the recognition and processing of DNA lesions. A damage recognition complex composed of 2 UvrA and 2 UvrB subunits scans DNA for abnormalities. Upon binding of the UvrA(2)B(2) complex to a putative damaged site, the DNA wraps around one UvrB monomer. DNA wrap is dependent on ATP binding by UvrB and probably causes local melting of the DNA helix, facilitating insertion of UvrB beta-hairpin between the DNA strands. Then UvrB probes one DNA strand for the presence of a lesion. If a lesion is found the UvrA subunits dissociate and the UvrB-DNA preincision complex is formed. This complex is subsequently bound by UvrC and the second UvrB is released. If no lesion is found, the DNA wraps around the other UvrB subunit that will check the other stand for damage. The polypeptide is UvrABC system protein B (Pseudarthrobacter chlorophenolicus (strain ATCC 700700 / DSM 12829 / CIP 107037 / JCM 12360 / KCTC 9906 / NCIMB 13794 / A6) (Arthrobacter chlorophenolicus)).